We begin with the raw amino-acid sequence, 262 residues long: Ankyrin repeat domain-containing protein 7 (262 aa).

ANK repeat units lie at residues 67–96 (KYRT…KINI), 100–129 (ENKS…DPNL), 133–162 (RYNT…DLEA), 166–195 (DGYT…DVNA), and 199–228 (YQRT…ELSC).

In Macaca fascicularis (Crab-eating macaque), this protein is Ankyrin repeat domain-containing protein 7 (ANKRD7).